We begin with the raw amino-acid sequence, 889 residues long: Terminal uridylyltransferase 3 (889 aa).

A C2H2-type; atypical zinc finger spans residues 123-151; the sequence is VRCDLCAKMIESRDEEQIQEHFQVHHAAL. Residues C125, C128, H143, and H148 each contribute to the Zn(2+) site. Residues S225 and 236–239 contribute to the UTP site; that span reads SDAD. D237 and D239 together coordinate Mg(2+). R286 contacts RNA. UTP is bound by residues 394–398, K419, K423, and 437–438; these read GVRNS and SY. In terms of domain architecture, PAP-associated spans 505 to 572; sequence LGGLIPLFFL…LCIDDPYEDN (68 aa). The short motif at 565 to 574 is the Nucleotide recognition motif (NRM) element; the sequence is IDDPYEDNFN. Disordered regions lie at residues 675–702 and 829–849; these read NNKS…HVES and RKKS…NHAG. Residues 829–846 are compositionally biased toward basic residues; the sequence is RKKSKGSKKRKNAVRRGN.

This sequence belongs to the DNA polymerase type-B-like family. Mg(2+) serves as cofactor. Mn(2+) is required as a cofactor.

Its subcellular location is the cytoplasm. It carries out the reaction RNA(n) + UTP = RNA(n)-3'-uridine ribonucleotide + diphosphate. Its function is as follows. Terminal uridylyltransferase which catalyzes the addition of Us to the 3'-hydroxyl group of single-stranded RNAs. Does not mediate RNA-independent UTP polymerization. This Trypanosoma brucei brucei protein is Terminal uridylyltransferase 3.